The following is a 557-amino-acid chain: Urocanate hydratase (557 aa).

Residues 48-49 (GG), Gln126, 178-180 (GMG), Asp198, Arg203, 244-245 (NA), 265-269 (QTSAH), 274-275 (YL), and Tyr323 each bind NAD(+). The active site involves Cys411. NAD(+) is bound at residue Gly493.

It belongs to the urocanase family. NAD(+) is required as a cofactor.

Its subcellular location is the cytoplasm. The catalysed reaction is 4-imidazolone-5-propanoate = trans-urocanate + H2O. It functions in the pathway amino-acid degradation; L-histidine degradation into L-glutamate; N-formimidoyl-L-glutamate from L-histidine: step 2/3. Catalyzes the conversion of urocanate to 4-imidazolone-5-propionate. This Beutenbergia cavernae (strain ATCC BAA-8 / DSM 12333 / CCUG 43141 / JCM 11478 / NBRC 16432 / NCIMB 13614 / HKI 0122) protein is Urocanate hydratase.